The sequence spans 191 residues: Mating-type-like protein ALPHA1 (191 aa).

Residues serine 118 to serine 174 constitute a DNA-binding region (alpha box).

It belongs to the MATALPHA1 family.

The protein localises to the nucleus. Its function is as follows. Mating type proteins are sequence specific DNA-binding proteins that act as master switches in yeast differentiation by controlling gene expression in a cell type-specific fashion. Transcriptional activator that induces the transcription of alpha-specific genes. The polypeptide is Mating-type-like protein ALPHA1 (MTL1ALPHA1) (Candida glabrata (strain ATCC 2001 / BCRC 20586 / JCM 3761 / NBRC 0622 / NRRL Y-65 / CBS 138) (Yeast)).